The sequence spans 825 residues: Neuroligin-3 (825 aa).

The signal sequence occupies residues 1 to 34; that stretch reads MWLQPSLSLSPTPTVGRSLCLTLGFLSLVLRAST. The Extracellular portion of the chain corresponds to 35–686; sequence QAPAPTVNTH…NPRDYSTELS (652 aa). An N-linked (GlcNAc...) asparagine glycan is attached at Asn95. Residues Cys103 and Cys138 are joined by a disulfide bond. A disordered region spans residues 151–172; it reads SGAKKQGEDLADNDGDEDEDIR. Residues 159–171 show a composition bias toward acidic residues; that stretch reads DLADNDGDEDEDI. 2 disulfide bridges follow: Cys317/Cys328 and Cys487/Cys521. N-linked (GlcNAc...) asparagine glycosylation occurs at Asn522. Composition is skewed to polar residues over residues 622-633 and 654-666; these read TKVPPPDTTHSS and AYSN…SWNG. The disordered stretch occupies residues 622–668; it reads TKVPPPDTTHSSHITRRPNGKTWSTKRPAISPAYSNENAPGSWNGDQ. A helical membrane pass occupies residues 687–707; it reads VTIAVGASLLFLNVLAFAALY. Residues 708 to 825 lie on the Cytoplasmic side of the membrane; that stretch reads YRKDKRRQEP…LPHSHSTTRV (118 aa). Position 722 is a phosphoserine (Ser722). A Phosphotyrosine modification is found at Tyr769.

It belongs to the type-B carboxylesterase/lipase family. In terms of assembly, homodimer, and heterodimer with NLGN1 and NLGN2. Interacts with neurexins NRXN1, NRXN2 and NRXN3. Interaction with neurexins is mediated by heparan sulfate glycan modification on neurexin. Interacts (via its C-terminus) with DLG4/PSD-95 (via PDZ domain 3). In terms of tissue distribution, brain and arteries (at protein level). Detected in heart, brain, spleen, lung, liver, skeletal muscle, kidney and testis. Expressed in olfactory bulb and olfactory epithelium. Found in olfactory ensheathing glia but not in olfactory neurons, and in developing peripheral glia.

The protein resides in the cell membrane. The protein localises to the synapse. Its function is as follows. Cell surface protein involved in cell-cell-interactions via its interactions with neurexin family members. Plays a role in synapse function and synaptic signal transmission, and probably mediates its effects by recruiting and clustering other synaptic proteins. May promote the initial formation of synapses, but is not essential for this. May also play a role in glia-glia or glia-neuron interactions in the developing peripheral nervous system. The protein is Neuroligin-3 (Nlgn3) of Mus musculus (Mouse).